The following is a 189-amino-acid chain: Histidinol-phosphate aminotransferase (189 aa).

It belongs to the class-II pyridoxal-phosphate-dependent aminotransferase family. Histidinol-phosphate aminotransferase subfamily. Homodimer. Requires pyridoxal 5'-phosphate as cofactor.

It carries out the reaction L-histidinol phosphate + 2-oxoglutarate = 3-(imidazol-4-yl)-2-oxopropyl phosphate + L-glutamate. Its pathway is amino-acid biosynthesis; L-histidine biosynthesis; L-histidine from 5-phospho-alpha-D-ribose 1-diphosphate: step 7/9. The polypeptide is Histidinol-phosphate aminotransferase (hisC) (Thiocapsa roseopersicina).